A 648-amino-acid polypeptide reads, in one-letter code: Protein KASH5 (648 aa).

Residues 1-606 (MHSILRSSLS…HSPGIRISQH (606 aa)) are Cytoplasmic-facing. The interval 206-228 (PEAEESANLESFGGEDPRPEGPA) is disordered. Positions 230 to 420 (AELLSNLEDL…EEQLSQSQEG (191 aa)) form a coiled coil. Residues 473–497 (EVEPEPEPEPEPEPEPEPQEVEFPS) are compositionally biased toward acidic residues. The tract at residues 473–545 (EVEPEPEPEP…EESWVLADPS (73 aa)) is disordered. Residues 607–627 (PLVPTPVLGLLLLLLLSILLF) form a helical; Anchor for type IV membrane protein membrane-spanning segment. At 628 to 648 (SQSPPPTWPHLQLYYLQPPPV) the chain is on the perinuclear space side.

As to quaternary structure, core component the LINC complex which is composed of inner nuclear membrane SUN domain-containing proteins coupled to outer nuclear membrane KASH domain-containing nesprins. SUN and KASH domain-containing proteins seem to bind each other promiscuously; however, differentially expression of LINC complex constituents is giving rise to specific assemblies. At least SUN1/2-containing core LINC complexes are proposed to be hexameric composed of three protomers of each KASH and SUN domain-containing protein. Interacts with SUN1; this interaction mediates its telomere localization by forming a SUN1:KASH5 LINC complex. Component of a probable SUN2:KASH5 LINC complex. Self-associates. Interacts with DYNC1H1, DCTN1, DYNC1I1/2 and PAFAH1B1; suggesting the association with the dynein-dynactin motor complex. Restricted to the testis and the early ootidogenesis ovary. Expressed in spermatocytes and oocytes (at protein level).

The protein localises to the nucleus outer membrane. It is found in the nucleus. The protein resides in the chromosome. It localises to the telomere. Its subcellular location is the nucleus envelope. Functionally, as a component of the LINC (LInker of Nucleoskeleton and Cytoskeleton) complex, involved in the connection between the nuclear lamina and the cytoskeleton. The nucleocytoplasmic interactions established by the LINC complex play an important role in the transmission of mechanical forces across the nuclear envelope and in nuclear movement and positioning. Required for telomere attachment to nuclear envelope in the prophase of meiosis and for rapid telomere prophase movements implicating a SUN1/2:KASH5 LINC complex in which SUN1 and SUN2 seem to act at least partial redundantly. Required for homolog pairing during meiotic prophase in spermatocytes and probably oocytes. Essential for male and female gametogenesis. Recruits cytoplasmic dynein to telomere attachment sites at the nuclear envelope in spermatocytes. In oocytes is involved in meiotic resumption and spindle formation. The chain is Protein KASH5 from Mus musculus (Mouse).